The sequence spans 114 residues: MEKAYRIKKNTDFQTIYKRGKSVANRQFVVYTYNSNKDHFRLGISVSKKLGNAVTRNRIKRAIRENFKIHKEDIIARDIIVIARQPAKDMTTLEIQGSLEHVLKIAKVFNKKIK.

The protein belongs to the RnpA family. In terms of assembly, consists of a catalytic RNA component (M1 or rnpB) and a protein subunit.

The enzyme catalyses Endonucleolytic cleavage of RNA, removing 5'-extranucleotides from tRNA precursor.. RNaseP catalyzes the removal of the 5'-leader sequence from pre-tRNA to produce the mature 5'-terminus. It can also cleave other RNA substrates such as 4.5S RNA. The protein component plays an auxiliary but essential role in vivo by binding to the 5'-leader sequence and broadening the substrate specificity of the ribozyme. The protein is Ribonuclease P protein component of Staphylococcus haemolyticus (strain JCSC1435).